We begin with the raw amino-acid sequence, 367 residues long: Metacaspase-1 (367 aa).

The disordered stretch occupies residues 47–77 (DPRTAPPPQPSSAPSPPPQIHAPPGQLPHPH). The segment covering 50–73 (TAPPPQPSSAPSPPPQIHAPPGQL) has biased composition (pro residues). Residues histidine 164 and cysteine 220 contribute to the active site.

The protein belongs to the peptidase C14B family. In terms of assembly, interacts (via N-terminus) with LSD1. Proteolytically processed; by an autocatalytic mechanism.

Cysteine protease that cleaves specifically after arginine or lysine residues. Does not cleave caspase-specific substrates. Acts as a positive regulator of cell death. Required for both oxidative stress cell death response and hypersensitive cell death response mediated by immune response. The sequence is that of Metacaspase-1 (AMC1) from Arabidopsis thaliana (Mouse-ear cress).